The following is a 291-amino-acid chain: Bifunctional protein FolD (291 aa).

NADP(+)-binding positions include G166–S168 and I232.

It belongs to the tetrahydrofolate dehydrogenase/cyclohydrolase family. As to quaternary structure, homodimer.

The catalysed reaction is (6R)-5,10-methylene-5,6,7,8-tetrahydrofolate + NADP(+) = (6R)-5,10-methenyltetrahydrofolate + NADPH. It carries out the reaction (6R)-5,10-methenyltetrahydrofolate + H2O = (6R)-10-formyltetrahydrofolate + H(+). It participates in one-carbon metabolism; tetrahydrofolate interconversion. Its function is as follows. Catalyzes the oxidation of 5,10-methylenetetrahydrofolate to 5,10-methenyltetrahydrofolate and then the hydrolysis of 5,10-methenyltetrahydrofolate to 10-formyltetrahydrofolate. In Photorhabdus laumondii subsp. laumondii (strain DSM 15139 / CIP 105565 / TT01) (Photorhabdus luminescens subsp. laumondii), this protein is Bifunctional protein FolD.